The following is a 153-amino-acid chain: D-erythrulose-4-phosphate isomerase 1 (153 aa).

Residue C69 is the Proton acceptor of the active site.

The protein belongs to the LacAB/RpiB family.

It catalyses the reaction D-erythrulose 4-phosphate = D-erythrose 4-phosphate. It participates in carbohydrate metabolism; erythritol degradation. The protein operates within carbohydrate metabolism; D-threitol degradation. Catalyzes the isomerization of D-erythrulose-4P to D-erythrose-4P. Involved in the degradation pathways of erythritol and D-threitol, that allow M.smegmatis to grow on these compounds as the sole carbon source. The sequence is that of D-erythrulose-4-phosphate isomerase 1 from Mycolicibacterium smegmatis (strain ATCC 700084 / mc(2)155) (Mycobacterium smegmatis).